The sequence spans 323 residues: Di/tripeptide transport ATP-binding protein DppF (323 aa).

The 250-residue stretch at 5 to 254 (LTARDLTRHY…PLHPYTRALL (250 aa)) folds into the ABC transporter domain. ATP is bound at residue 47–54 (GESGCGKS).

This sequence belongs to the ABC transporter superfamily. As to quaternary structure, the complex is composed of two ATP-binding proteins (DppD and DppF), two transmembrane proteins (DppB and DppC) and a solute-binding protein (DppA1-A5). Five orthologous SBPs (DppA1-A5) are present in P.aeruginosa, which increases the substrate specificity of the DppBCDF transporter.

It is found in the cell inner membrane. The enzyme catalyses a dipeptide(out) + ATP + H2O = a dipeptide(in) + ADP + phosphate + H(+). Functionally, part of the ABC transporter DppABCDF involved in the uptake of various di/tripeptides. Is also involved in the uptake of phaseolotoxin, a toxic tripeptide inhibiting the enzyme ornithine carbamoyltransferase. Responsible for energy coupling to the transport system. The chain is Di/tripeptide transport ATP-binding protein DppF from Pseudomonas aeruginosa (strain UCBPP-PA14).